Reading from the N-terminus, the 479-residue chain is ATP synthase subunit beta (479 aa).

162–169 contributes to the ATP binding site; it reads GGAGVGKT.

It belongs to the ATPase alpha/beta chains family. In terms of assembly, F-type ATPases have 2 components, CF(1) - the catalytic core - and CF(0) - the membrane proton channel. CF(1) has five subunits: alpha(3), beta(3), gamma(1), delta(1), epsilon(1). CF(0) has three main subunits: a(1), b(2) and c(9-12). The alpha and beta chains form an alternating ring which encloses part of the gamma chain. CF(1) is attached to CF(0) by a central stalk formed by the gamma and epsilon chains, while a peripheral stalk is formed by the delta and b chains.

It is found in the cell membrane. The catalysed reaction is ATP + H2O + 4 H(+)(in) = ADP + phosphate + 5 H(+)(out). Produces ATP from ADP in the presence of a proton gradient across the membrane. The catalytic sites are hosted primarily by the beta subunits. This chain is ATP synthase subunit beta, found in Mesoplasma florum (strain ATCC 33453 / NBRC 100688 / NCTC 11704 / L1) (Acholeplasma florum).